We begin with the raw amino-acid sequence, 273 residues long: Dermonecrotic toxin LapSicTox-alphaIB1aiii (273 aa).

H5 is a catalytic residue. Positions 25 and 27 each coordinate Mg(2+). Catalysis depends on H41, which acts as the Nucleophile. Intrachain disulfides connect C45–C51 and C47–C190. D85 contacts Mg(2+). A glycan (N-linked (GlcNAc...) asparagine) is linked at N250.

It belongs to the arthropod phospholipase D family. Class II subfamily. It depends on Mg(2+) as a cofactor. In terms of tissue distribution, expressed by the venom gland.

It is found in the secreted. It catalyses the reaction an N-(acyl)-sphingosylphosphocholine = an N-(acyl)-sphingosyl-1,3-cyclic phosphate + choline. The catalysed reaction is an N-(acyl)-sphingosylphosphoethanolamine = an N-(acyl)-sphingosyl-1,3-cyclic phosphate + ethanolamine. The enzyme catalyses a 1-acyl-sn-glycero-3-phosphocholine = a 1-acyl-sn-glycero-2,3-cyclic phosphate + choline. It carries out the reaction a 1-acyl-sn-glycero-3-phosphoethanolamine = a 1-acyl-sn-glycero-2,3-cyclic phosphate + ethanolamine. In terms of biological role, dermonecrotic toxins cleave the phosphodiester linkage between the phosphate and headgroup of certain phospholipids (sphingolipid and lysolipid substrates), forming an alcohol (often choline) and a cyclic phosphate. This toxin acts on sphingomyelin (SM). It may also act on ceramide phosphoethanolamine (CPE), lysophosphatidylcholine (LPC) and lysophosphatidylethanolamine (LPE), but not on lysophosphatidylserine (LPS), and lysophosphatidylglycerol (LPG). It acts by transphosphatidylation, releasing exclusively cyclic phosphate products as second products. Induces dermonecrosis, hemolysis, increased vascular permeability, edema, inflammatory response, and platelet aggregation. The sequence is that of Dermonecrotic toxin LapSicTox-alphaIB1aiii from Loxosceles apachea (Apache recluse spider).